The chain runs to 181 residues: Salmonella anti-inflammatory response activator (181 aa).

Residues 4–24 form a helical membrane-spanning segment; it reads FVYIYILVIYGSYLWFSLGGN.

In terms of assembly, interacts with host (human) STAT3.

The protein localises to the membrane. Its subcellular location is the host cytoplasm. A Salmonella strain-specific effector that induces a host STAT3-dependent anti-inflammatory pathway. In bacteria-infected host cells (human) leads to phosphorylation of host STAT3, at least on 'Tyr-705' and interleukin-10 (IL-10, IL10) production; expressing the gene alone in host cells induces STAT3 phosphorylation and IL-10 production. IL-10 production requires STAT3 in infected cells. Contributes to virulence in mouse infection models. Encoded in only a few S.typhimurium serovars, it may be a specific effector for adaptation to bovine hosts. This Salmonella typhimurium (strain 14028s / SGSC 2262) protein is Salmonella anti-inflammatory response activator.